A 357-amino-acid chain; its full sequence is UDP-3-O-acylglucosamine N-acyltransferase (357 aa).

Histidine 251 serves as the catalytic Proton acceptor.

It belongs to the transferase hexapeptide repeat family. LpxD subfamily. Homotrimer.

The enzyme catalyses a UDP-3-O-[(3R)-3-hydroxyacyl]-alpha-D-glucosamine + a (3R)-hydroxyacyl-[ACP] = a UDP-2-N,3-O-bis[(3R)-3-hydroxyacyl]-alpha-D-glucosamine + holo-[ACP] + H(+). It participates in bacterial outer membrane biogenesis; LPS lipid A biosynthesis. In terms of biological role, catalyzes the N-acylation of UDP-3-O-acylglucosamine using 3-hydroxyacyl-ACP as the acyl donor. Is involved in the biosynthesis of lipid A, a phosphorylated glycolipid that anchors the lipopolysaccharide to the outer membrane of the cell. In Ralstonia pickettii (strain 12J), this protein is UDP-3-O-acylglucosamine N-acyltransferase.